A 120-amino-acid chain; its full sequence is Meiosis expressed gene 1 protein homolog (120 aa).

Positions 1–45 (MDGLAIGGVSAPMTAERPQQVKKQLSRRTPDAADGRKPTRMERAK) are disordered. Positions 28–45 (RTPDAADGRKPTRMERAK) are enriched in basic and acidic residues.

The protein belongs to the MEIG1 family.

The polypeptide is Meiosis expressed gene 1 protein homolog (Oxyrrhis marina (Dinoflagellate)).